Reading from the N-terminus, the 802-residue chain is Copper-exporting P-type ATPase (802 aa).

HMA domains lie at 5–70 (KKTT…YGVA) and 72–138 (ETVE…YDAS). Cu(+) contacts are provided by Cys-16, Cys-19, Cys-83, and Cys-86. Helical transmembrane passes span 161 to 181 (LIIS…HLFN), 192 to 212 (WFQF…FYVG), 224 to 244 (MDVL…YEMV), 256 to 276 (LYFE…YLEA), 411 to 431 (YFVP…ITLV), and 438 to 458 (PALV…LGLA). Residue Asp-495 is the 4-aspartylphosphate intermediate of the active site. Residues Asp-690 and Asp-694 each coordinate Mg(2+). 2 helical membrane-spanning segments follow: residues 748 to 767 (LFWA…LGLL) and 771 to 790 (VAGA…ALRL).

It belongs to the cation transport ATPase (P-type) (TC 3.A.3) family. Type IB subfamily.

Its subcellular location is the cell membrane. It carries out the reaction Cu(+)(in) + ATP + H2O = Cu(+)(out) + ADP + phosphate + H(+). In terms of biological role, involved in copper export. The protein is Copper-exporting P-type ATPase (copA) of Staphylococcus aureus (strain COL).